The primary structure comprises 64 residues: MSKLGVFLTICLLLFPLTALQLDGDQPADKPAQRKLKILPKRKHWTRFTCCYEEECPPSCKLCC.

A signal peptide spans 1 to 19 (MSKLGVFLTICLLLFPLTA). Residues 20–49 (LQLDGDQPADKPAQRKLKILPKRKHWTRFT) constitute a propeptide that is removed on maturation. Disulfide bonds link C50–C64, C51–C60, and C56–C63.

Belongs to the conotoxin M superfamily. As to expression, expressed by the venom duct.

It is found in the secreted. The sequence is that of Conotoxin reg3.16 from Conus regius (Crown cone).